Reading from the N-terminus, the 112-residue chain is FK506-binding protein 1 (112 aa).

Positions 1–10 (MSAPATTQVE) are enriched in polar residues. Positions 1-20 (MSAPATTQVEILQEGDGKTF) are disordered. The region spanning 24–112 (GDLVTIHYTG…LFDVELLNVN (89 aa)) is the PPIase FKBP-type domain.

Belongs to the FKBP-type PPIase family. FKBP1 subfamily.

Its subcellular location is the cytoplasm. It catalyses the reaction [protein]-peptidylproline (omega=180) = [protein]-peptidylproline (omega=0). With respect to regulation, inhibited by both FK506 and rapamycin. Functionally, PPIases accelerate the folding of proteins. It catalyzes the cis-trans isomerization of proline imidic peptide bonds in oligopeptides. This chain is FK506-binding protein 1 (FPR1), found in Debaryomyces hansenii (strain ATCC 36239 / CBS 767 / BCRC 21394 / JCM 1990 / NBRC 0083 / IGC 2968) (Yeast).